The chain runs to 508 residues: 3-octaprenyl-4-hydroxybenzoate carboxy-lyase (508 aa).

Asparagine 172 is a binding site for Mn(2+). Residues 175 to 177 (IYR), 189 to 191 (RWL), and 194 to 195 (RG) contribute to the prenylated FMN site. Glutamate 238 lines the Mn(2+) pocket. The active-site Proton donor is aspartate 287. The interval 483-508 (GEYGIATPPPPPRHSPPSDERGHDDV) is disordered. Over residues 498–508 (PPSDERGHDDV) the composition is skewed to basic and acidic residues.

This sequence belongs to the UbiD family. Homohexamer. Prenylated FMN is required as a cofactor. Mn(2+) serves as cofactor.

It localises to the cell membrane. It carries out the reaction a 4-hydroxy-3-(all-trans-polyprenyl)benzoate + H(+) = a 2-(all-trans-polyprenyl)phenol + CO2. Its pathway is cofactor biosynthesis; ubiquinone biosynthesis. Functionally, catalyzes the decarboxylation of 3-octaprenyl-4-hydroxy benzoate to 2-octaprenylphenol, an intermediate step in ubiquinone biosynthesis. The chain is 3-octaprenyl-4-hydroxybenzoate carboxy-lyase from Chromohalobacter salexigens (strain ATCC BAA-138 / DSM 3043 / CIP 106854 / NCIMB 13768 / 1H11).